We begin with the raw amino-acid sequence, 447 residues long: Tubulin beta chain (447 aa).

Residues Gln-11, Glu-69, Ser-138, Gly-142, Thr-143, Gly-144, Asn-204, and Asn-226 each contribute to the GTP site. Residue Glu-69 coordinates Mg(2+). The disordered stretch occupies residues 424-447 (QYQEASVSEGEEEYDEEAPLEGEE). Residues 432–447 (EGEEEYDEEAPLEGEE) are compositionally biased toward acidic residues.

It belongs to the tubulin family. Dimer of alpha and beta chains. A typical microtubule is a hollow water-filled tube with an outer diameter of 25 nm and an inner diameter of 15 nM. Alpha-beta heterodimers associate head-to-tail to form protofilaments running lengthwise along the microtubule wall with the beta-tubulin subunit facing the microtubule plus end conferring a structural polarity. Microtubules usually have 13 protofilaments but different protofilament numbers can be found in some organisms and specialized cells. Mg(2+) is required as a cofactor.

It localises to the cytoplasm. Its subcellular location is the cytoskeleton. Its function is as follows. Tubulin is the major constituent of microtubules, a cylinder consisting of laterally associated linear protofilaments composed of alpha- and beta-tubulin heterodimers. Microtubules grow by the addition of GTP-tubulin dimers to the microtubule end, where a stabilizing cap forms. Below the cap, tubulin dimers are in GDP-bound state, owing to GTPase activity of alpha-tubulin. The protein is Tubulin beta chain of Venturia inaequalis (Apple scab fungus).